Here is a 368-residue protein sequence, read N- to C-terminus: uncharacterized protein (368 aa).

Belongs to the ornithine cyclodeaminase/mu-crystallin family.

This is an uncharacterized protein from Dictyostelium discoideum (Social amoeba).